We begin with the raw amino-acid sequence, 269 residues long: 4-hydroxy-tetrahydrodipicolinate reductase (269 aa).

Residues 11-16 (GASGRM) and E37 contribute to the NAD(+) site. R38 contributes to the NADP(+) binding site. Residues 101–103 (GTT) and 125–128 (AGNM) contribute to the NAD(+) site. H158 (proton donor/acceptor) is an active-site residue. H159 lines the (S)-2,3,4,5-tetrahydrodipicolinate pocket. The Proton donor role is filled by K162. A (S)-2,3,4,5-tetrahydrodipicolinate-binding site is contributed by 168–169 (GT).

This sequence belongs to the DapB family.

It localises to the cytoplasm. It catalyses the reaction (S)-2,3,4,5-tetrahydrodipicolinate + NAD(+) + H2O = (2S,4S)-4-hydroxy-2,3,4,5-tetrahydrodipicolinate + NADH + H(+). The catalysed reaction is (S)-2,3,4,5-tetrahydrodipicolinate + NADP(+) + H2O = (2S,4S)-4-hydroxy-2,3,4,5-tetrahydrodipicolinate + NADPH + H(+). It functions in the pathway amino-acid biosynthesis; L-lysine biosynthesis via DAP pathway; (S)-tetrahydrodipicolinate from L-aspartate: step 4/4. Catalyzes the conversion of 4-hydroxy-tetrahydrodipicolinate (HTPA) to tetrahydrodipicolinate. The sequence is that of 4-hydroxy-tetrahydrodipicolinate reductase from Cereibacter sphaeroides (strain ATCC 17023 / DSM 158 / JCM 6121 / CCUG 31486 / LMG 2827 / NBRC 12203 / NCIMB 8253 / ATH 2.4.1.) (Rhodobacter sphaeroides).